Reading from the N-terminus, the 60-residue chain is Small, acid-soluble spore protein H 2 (60 aa).

The disordered stretch occupies residues 38–60 (TIHPLDNPSQKQSVPVASLEEHS).

It belongs to the SspH family.

Its subcellular location is the spore core. The sequence is that of Small, acid-soluble spore protein H 2 from Geobacillus thermodenitrificans (strain NG80-2).